The primary structure comprises 337 residues: Viral cathepsin (337 aa).

Positions 1–16 (MNKILILLLLVSAVLT) are cleaved as a signal peptide. The propeptide at 17–126 (SHDQVVAVTI…VVDGPGQRQR (110 aa)) is activation peptide. 3 disulfide bridges follow: C147/C188, C181/C221, and C276/C324. C150 is a catalytic residue. Catalysis depends on residues H283 and N303.

This sequence belongs to the peptidase C1 family. Synthesized as an inactive proenzyme and activated by proteolytic removal of the inhibitory propeptide.

The enzyme catalyses Endopeptidase of broad specificity, hydrolyzing substrates of both cathepsin L and cathepsin B.. Its function is as follows. Cysteine protease that plays an essential role in host liquefaction to facilitate horizontal transmission of the virus. May participate in the degradation of foreign protein expressed by the baculovirus system. The protein is Viral cathepsin (VCATH) of Mamestra configurata (bertha armyworm).